The chain runs to 261 residues: NAD-capped RNA hydrolase NudC (261 aa).

Residue R74 coordinates substrate. Positions 103, 106, 121, and 124 each coordinate Zn(2+). Substrate is bound at residue Y129. Residues 130 to 253 (PRIFPCIIVA…TIARALIEQT (124 aa)) form the Nudix hydrolase domain. Residues A163, E179, and E183 each coordinate a divalent metal cation. The Nudix box signature appears at 164–185 (GFVEVGETLEQCVAREVKEETG). 197-204 (QPWAFPSS) is a binding site for substrate. E224 serves as a coordination point for a divalent metal cation. Residue A246 coordinates substrate.

The protein belongs to the Nudix hydrolase family. NudC subfamily. In terms of assembly, homodimer. It depends on Mg(2+) as a cofactor. The cofactor is Mn(2+). Zn(2+) serves as cofactor.

The catalysed reaction is a 5'-end NAD(+)-phospho-ribonucleoside in mRNA + H2O = a 5'-end phospho-adenosine-phospho-ribonucleoside in mRNA + beta-nicotinamide D-ribonucleotide + 2 H(+). It carries out the reaction NAD(+) + H2O = beta-nicotinamide D-ribonucleotide + AMP + 2 H(+). The enzyme catalyses NADH + H2O = reduced beta-nicotinamide D-ribonucleotide + AMP + 2 H(+). MRNA decapping enzyme that specifically removes the nicotinamide adenine dinucleotide (NAD) cap from a subset of mRNAs by hydrolyzing the diphosphate linkage to produce nicotinamide mononucleotide (NMN) and 5' monophosphate mRNA. The NAD-cap is present at the 5'-end of some mRNAs and stabilizes RNA against 5'-processing. Has preference for mRNAs with a 5'-end purine. Catalyzes the hydrolysis of a broad range of dinucleotide pyrophosphates. The sequence is that of NAD-capped RNA hydrolase NudC from Vibrio vulnificus (strain CMCP6).